The chain runs to 320 residues: Lipoyl synthase (320 aa).

Residues 1 to 27 form a disordered region; that stretch reads MRVEIDHRNSGGGKLRHPEKQHRPDNP. Residues 16 to 25 show a composition bias toward basic and acidic residues; sequence RHPEKQHRPD. 7 residues coordinate [4Fe-4S] cluster: C61, C66, C72, C87, C91, C94, and S300. Residues 73-289 form the Radical SAM core domain; the sequence is WSQRHATMMI…AAMARAKGFL (217 aa).

The protein belongs to the radical SAM superfamily. Lipoyl synthase family. [4Fe-4S] cluster is required as a cofactor.

The protein resides in the cytoplasm. The enzyme catalyses [[Fe-S] cluster scaffold protein carrying a second [4Fe-4S](2+) cluster] + N(6)-octanoyl-L-lysyl-[protein] + 2 oxidized [2Fe-2S]-[ferredoxin] + 2 S-adenosyl-L-methionine + 4 H(+) = [[Fe-S] cluster scaffold protein] + N(6)-[(R)-dihydrolipoyl]-L-lysyl-[protein] + 4 Fe(3+) + 2 hydrogen sulfide + 2 5'-deoxyadenosine + 2 L-methionine + 2 reduced [2Fe-2S]-[ferredoxin]. Its pathway is protein modification; protein lipoylation via endogenous pathway; protein N(6)-(lipoyl)lysine from octanoyl-[acyl-carrier-protein]: step 2/2. Its function is as follows. Catalyzes the radical-mediated insertion of two sulfur atoms into the C-6 and C-8 positions of the octanoyl moiety bound to the lipoyl domains of lipoate-dependent enzymes, thereby converting the octanoylated domains into lipoylated derivatives. The sequence is that of Lipoyl synthase from Acidiphilium cryptum (strain JF-5).